The chain runs to 269 residues: CCAAT/enhancer-binding protein delta (269 aa).

Disordered stretches follow at residues 1 to 48 (MSAA…PGAA), 97 to 133 (PLEL…APGS), and 151 to 219 (AAGQ…NQEM). S2 is modified (N-acetylserine). 2 stretches are compositionally biased toward low complexity: residues 36–48 (GAEP…PGAA) and 97–107 (PLELLPGGPAR). Residue K120 forms a Glycyl lysine isopeptide (Lys-Gly) (interchain with G-Cter in SUMO) linkage. The segment covering 155 to 175 (PTPPTSPEPPRSSPRQTPAPG) has biased composition (pro residues). Positions 177 to 201 (AREKSAGKRGPDRGSPEYRQRRERN) are enriched in basic and acidic residues. In terms of domain architecture, bZIP spans 191–254 (SPEYRQRRER…AGLRQFFKQL (64 aa)). Residues 195-222 (RQRRERNNIAVRKSRDKAKRRNQEMQQK) are basic motif. The tract at residues 226–254 (LSAENEKLHQRVEQLTRDLAGLRQFFKQL) is leucine-zipper.

The protein belongs to the bZIP family. C/EBP subfamily. As to quaternary structure, binds DNA as a homodimer and as a heterodimer. Can form stable heterodimers with CEBPB. Can form stable heterodimers with CEBPA and CEBPE. Directly interacts with SPI1/PU.1; this interaction does not affect DNA-binding properties of each partner. Interacts with PRDM16.

The protein resides in the nucleus. In terms of biological role, transcription activator that recognizes two different DNA motifs: the CCAAT homology common to many promoters and the enhanced core homology common to many enhancers. Important transcription factor regulating the expression of genes involved in immune and inflammatory responses. Transcriptional activator that enhances IL6 transcription alone and as heterodimer with CEBPB. The sequence is that of CCAAT/enhancer-binding protein delta (CEBPD) from Homo sapiens (Human).